Consider the following 112-residue polypeptide: Protein lin-52 homolog (112 aa).

The protein belongs to the lin-52 family. In terms of assembly, component of the DREAM complex.

This Danio rerio (Zebrafish) protein is Protein lin-52 homolog (lin52).